A 404-amino-acid chain; its full sequence is POU domain, class 2, transcription factor 3L (404 aa).

Disordered stretches follow at residues Met1–Phe29 and Thr44–Glu67. A compositionally biased stretch (basic and acidic residues) spans Gly16 to Phe29. The POU-specific domain occupies Gln187–Glu235. The homeobox DNA-binding region spans Lys259–Val297. The tract at residues Met346–Leu367 is disordered. Over residues Ser350–Pro363 the composition is skewed to low complexity.

Belongs to the POU transcription factor family. Class-2 subfamily.

The protein localises to the nucleus. Functionally, transcription factor that binds to the octamer motif (5'-ATTTGCAT-3') and regulates cell type-specific differentiation pathways. This is POU domain, class 2, transcription factor 3L (pou2f3.L) from Xenopus laevis (African clawed frog).